Reading from the N-terminus, the 351-residue chain is Translation initiation factor eIF2B subunit beta (351 aa).

It belongs to the eIF-2B alpha/beta/delta subunits family. Component of the translation initiation factor 2B (eIF2B) complex which is a heterodecamer of two sets of five different subunits: alpha, beta, gamma, delta and epsilon. Subunits alpha, beta and delta comprise a regulatory subcomplex and subunits epsilon and gamma comprise a catalytic subcomplex. Within the complex, the hexameric regulatory complex resides at the center, with the two heterodimeric catalytic subcomplexes bound on opposite sides.

Its subcellular location is the cytoplasm. It localises to the cytosol. Activated by the chemical integrated stress response (ISR) inhibitor ISRIB which stimulates guanine nucleotide exchange factor activity for both phosphorylated and unphosphorylated eIF2. Functionally, acts as a component of the translation initiation factor 2B (eIF2B) complex, which catalyzes the exchange of GDP for GTP on eukaryotic initiation factor 2 (eIF2) gamma subunit. Its guanine nucleotide exchange factor activity is repressed when bound to eIF2 complex phosphorylated on the alpha subunit, thereby limiting the amount of methionyl-initiator methionine tRNA available to the ribosome and consequently global translation is repressed. The sequence is that of Translation initiation factor eIF2B subunit beta (EIF2B2) from Homo sapiens (Human).